A 469-amino-acid chain; its full sequence is GTPase Der (469 aa).

2 consecutive EngA-type G domains span residues 3–167 and 176–349; these read PTLV…PEEE and PKIA…AAAF. GTP contacts are provided by residues 9–16, 56–60, 119–122, 182–189, 229–233, and 294–297; these read GRPNVGKS, DTGGL, NKAE, DTAGV, and NKWD. Residues 350–436 enclose the KH-like domain; it reads IKLSTPKLTR…RIQIKEDEGK (87 aa). A compositionally biased stretch (basic and acidic residues) spans 432–443; sequence EDEGKNPFEGKK. A disordered region spans residues 432–469; the sequence is EDEGKNPFEGKKRAPLSESEATRMRRKKRVRRKVYGAD. Residues 455 to 469 are compositionally biased toward basic residues; that stretch reads MRRKKRVRRKVYGAD.

The protein belongs to the TRAFAC class TrmE-Era-EngA-EngB-Septin-like GTPase superfamily. EngA (Der) GTPase family. In terms of assembly, associates with the 50S ribosomal subunit.

Its function is as follows. GTPase that plays an essential role in the late steps of ribosome biogenesis. This chain is GTPase Der, found in Thiobacillus denitrificans (strain ATCC 25259 / T1).